The primary structure comprises 294 residues: Golgi phosphoprotein 3 homolog sauron (294 aa).

Residues 1 to 52 form a disordered region; the sequence is MNRSDGLVRRSVKPRENGGAEGGLNANTPDDNQDALDNLKDQEDNIDDGDSK. Over residues 37 to 52 the composition is skewed to basic and acidic residues; sequence DNLKDQEDNIDDGDSK. Residues Trp77, Arg86, Lys167, and Arg170 each coordinate a 1,2-diacyl-sn-glycero-3-phospho-(1D-myo-inositol 4-phosphate). A beta-hairpin required for oligomerization region spans residues 186-197; sequence EKQNFLLFDMTT.

It belongs to the GOLPH3/VPS74 family. In terms of assembly, homooligomer. Interacts with botv, Ext2 and ttv. Interacts with Vti1. Interacts with Vps35, Rab5, Chc, Rab11, zip, Pav and Septin1.

Its subcellular location is the golgi apparatus membrane. It is found in the cytoplasmic vesicle. The protein resides in the cleavage furrow. Phosphatidylinositol-4-phosphate-binding protein that links Golgi membranes to the cytoskeleton and may participate in the tensile force required for vesicle budding from the Golgi. Thereby, may play a role in Golgi membrane trafficking and could indirectly give its flattened shape to the Golgi apparatus. May also bind to the coatomer to regulate Golgi membrane trafficking. May play a role in anterograde transport from the Golgi to the plasma membrane and regulate secretion. Also involved in the control of the localization of Golgi enzymes through interaction with their cytoplasmic part. Functions in cytokinesis by regulating contractile ring formation and vesicle trafficking during cleavage furrow ingression. May also have a role in the intital steps of central spindle formation. Can also bind phosphatidylinositol-3-phosphate and phosphatidylinositol-5-phosphate in vitro. The sequence is that of Golgi phosphoprotein 3 homolog sauron from Drosophila melanogaster (Fruit fly).